A 273-amino-acid chain; its full sequence is 4-hydroxy-tetrahydrodipicolinate reductase (273 aa).

NAD(+) contacts are provided by residues 8-13, E34, 102-104, and 128-131; these read GCAGNM, GTT, and SPNM. The active-site Proton donor/acceptor is the H161. H162 provides a ligand contact to (S)-2,3,4,5-tetrahydrodipicolinate. The Proton donor role is filled by K165. 171–172 provides a ligand contact to (S)-2,3,4,5-tetrahydrodipicolinate; the sequence is GT.

Belongs to the DapB family.

It is found in the cytoplasm. It catalyses the reaction (S)-2,3,4,5-tetrahydrodipicolinate + NAD(+) + H2O = (2S,4S)-4-hydroxy-2,3,4,5-tetrahydrodipicolinate + NADH + H(+). The catalysed reaction is (S)-2,3,4,5-tetrahydrodipicolinate + NADP(+) + H2O = (2S,4S)-4-hydroxy-2,3,4,5-tetrahydrodipicolinate + NADPH + H(+). Its pathway is amino-acid biosynthesis; L-lysine biosynthesis via DAP pathway; (S)-tetrahydrodipicolinate from L-aspartate: step 4/4. Its function is as follows. Catalyzes the conversion of 4-hydroxy-tetrahydrodipicolinate (HTPA) to tetrahydrodipicolinate. This Methanosphaera stadtmanae (strain ATCC 43021 / DSM 3091 / JCM 11832 / MCB-3) protein is 4-hydroxy-tetrahydrodipicolinate reductase.